The following is a 231-amino-acid chain: Cytochrome c oxidase assembly factor 7 (231 aa).

Sel1-like repeat units follow at residues 34–66 (PDGCNRLAEYLENIKKNFESAAQILKINCDQNE), 68–104 (SESCYKLGAYYVTGKGGLPVDLKAAYGCFLKSCNKGG), 108–145 (IDSCHNVGLLSHDGRVNDDKPDALKARDYYNKACDGNF), 146–182 (AASCFNLSAIYLQGAPGIPKDMNMALHFSEKACSLGH), and 183–218 (MWGCANASRMYKLGDGVAKNDEKAESLKNKARDLHR).

This sequence belongs to the hcp beta-lactamase family.

It is found in the mitochondrion intermembrane space. In terms of biological role, may be required for assembly of mitochondrial respiratory chain complexes. The sequence is that of Cytochrome c oxidase assembly factor 7 (coa7) from Xenopus tropicalis (Western clawed frog).